The chain runs to 154 residues: Endoribonuclease YbeY (154 aa).

Zn(2+) is bound by residues His-113, His-117, and His-123.

The protein belongs to the endoribonuclease YbeY family. It depends on Zn(2+) as a cofactor.

It localises to the cytoplasm. Single strand-specific metallo-endoribonuclease involved in late-stage 70S ribosome quality control and in maturation of the 3' terminus of the 16S rRNA. The sequence is that of Endoribonuclease YbeY from Aeromonas salmonicida (strain A449).